A 208-amino-acid polypeptide reads, in one-letter code: Cytochrome c biogenesis ATP-binding export protein CcmA (208 aa).

Positions 3 to 206 (LSGKDLTAYR…LEKFLPPQEK (204 aa)) constitute an ABC transporter domain. 35–42 (GPNGIGKS) is a binding site for ATP.

Belongs to the ABC transporter superfamily. CcmA exporter (TC 3.A.1.107) family. In terms of assembly, the complex is composed of two ATP-binding proteins (CcmA) and two transmembrane proteins (CcmB).

Its subcellular location is the cell inner membrane. It carries out the reaction heme b(in) + ATP + H2O = heme b(out) + ADP + phosphate + H(+). Part of the ABC transporter complex CcmAB involved in the biogenesis of c-type cytochromes; once thought to export heme, this seems not to be the case, but its exact role is uncertain. Responsible for energy coupling to the transport system. The protein is Cytochrome c biogenesis ATP-binding export protein CcmA of Bartonella henselae (strain ATCC 49882 / DSM 28221 / CCUG 30454 / Houston 1) (Rochalimaea henselae).